A 345-amino-acid polypeptide reads, in one-letter code: N-acetyl-gamma-glutamyl-phosphate reductase (345 aa).

Cys149 is a catalytic residue.

It belongs to the NAGSA dehydrogenase family. Type 1 subfamily.

It is found in the cytoplasm. The enzyme catalyses N-acetyl-L-glutamate 5-semialdehyde + phosphate + NADP(+) = N-acetyl-L-glutamyl 5-phosphate + NADPH + H(+). It functions in the pathway amino-acid biosynthesis; L-arginine biosynthesis; N(2)-acetyl-L-ornithine from L-glutamate: step 3/4. Catalyzes the NADPH-dependent reduction of N-acetyl-5-glutamyl phosphate to yield N-acetyl-L-glutamate 5-semialdehyde. The chain is N-acetyl-gamma-glutamyl-phosphate reductase from Janthinobacterium sp. (strain Marseille) (Minibacterium massiliensis).